A 313-amino-acid polypeptide reads, in one-letter code: Protochlorophyllide reductase (313 aa).

This sequence belongs to the short-chain dehydrogenases/reductases (SDR) family. POR subfamily.

The protein localises to the plastid. Its subcellular location is the chloroplast. The enzyme catalyses chlorophyllide a + NADP(+) = protochlorophyllide a + NADPH + H(+). The protein operates within porphyrin-containing compound metabolism; chlorophyll biosynthesis. Phototransformation of protochlorophyllide (Pchlide) to chlorophyllide (Chlide). The polypeptide is Protochlorophyllide reductase (Avena sativa (Oat)).